A 140-amino-acid polypeptide reads, in one-letter code: Nucleoside diphosphate kinase (140 aa).

ATP contacts are provided by Lys11, Phe59, Arg87, Thr93, Arg104, and Asn114. The active-site Pros-phosphohistidine intermediate is the His117.

Belongs to the NDK family. As to quaternary structure, homotetramer. The cofactor is Mg(2+).

The protein localises to the cytoplasm. It catalyses the reaction a 2'-deoxyribonucleoside 5'-diphosphate + ATP = a 2'-deoxyribonucleoside 5'-triphosphate + ADP. The enzyme catalyses a ribonucleoside 5'-diphosphate + ATP = a ribonucleoside 5'-triphosphate + ADP. Major role in the synthesis of nucleoside triphosphates other than ATP. The ATP gamma phosphate is transferred to the NDP beta phosphate via a ping-pong mechanism, using a phosphorylated active-site intermediate. In Rhodopseudomonas palustris (strain BisB5), this protein is Nucleoside diphosphate kinase.